Here is a 359-residue protein sequence, read N- to C-terminus: 3-dehydroquinate synthase (359 aa).

NAD(+) contacts are provided by residues 72–77, 106–110, 130–131, Lys-143, Lys-152, and 170–173; these read EGEIHK, GVIGD, TS, and CLKT. 3 residues coordinate Zn(2+): Glu-185, His-248, and His-264.

It belongs to the sugar phosphate cyclases superfamily. Dehydroquinate synthase family. Co(2+) is required as a cofactor. Zn(2+) serves as cofactor. The cofactor is NAD(+).

The protein resides in the cytoplasm. The enzyme catalyses 7-phospho-2-dehydro-3-deoxy-D-arabino-heptonate = 3-dehydroquinate + phosphate. It participates in metabolic intermediate biosynthesis; chorismate biosynthesis; chorismate from D-erythrose 4-phosphate and phosphoenolpyruvate: step 2/7. Functionally, catalyzes the conversion of 3-deoxy-D-arabino-heptulosonate 7-phosphate (DAHP) to dehydroquinate (DHQ). This Dehalococcoides mccartyi (strain CBDB1) protein is 3-dehydroquinate synthase.